The following is a 292-amino-acid chain: tRNA pseudouridine synthase B (292 aa).

Residue D40 is the Nucleophile of the active site.

This sequence belongs to the pseudouridine synthase TruB family. Type 1 subfamily.

It carries out the reaction uridine(55) in tRNA = pseudouridine(55) in tRNA. In terms of biological role, responsible for synthesis of pseudouridine from uracil-55 in the psi GC loop of transfer RNAs. This is tRNA pseudouridine synthase B from Mycoplasma capricolum subsp. capricolum (strain California kid / ATCC 27343 / NCTC 10154).